The following is a 606-amino-acid chain: NADH-ubiquinone oxidoreductase chain 5 (606 aa).

Methionine 1 is modified (N-formylmethionine). 15 helical membrane passes run 4–24, 43–63, 87–107, 117–137, 140–160, 171–191, 213–233, 241–261, 273–293, 310–330, 366–386, 413–433, 457–477, 482–502, and 582–602; these read FSSL…MMSF, AFIT…ELII, MMFI…SMWY, FFKY…ANNL, LFIG…WWYG, AILY…WFLT, LIGL…HPWL, TPVS…FLLI, IQSI…MCAL, LGLM…LHIC, MPFT…MPFL, LIAT…ALLG, LLIG…PTTI, MPYY…ILAL, and GLIK…MILF.

As to quaternary structure, core subunit of respiratory chain NADH dehydrogenase (Complex I) which is composed of 45 different subunits.

The protein localises to the mitochondrion inner membrane. The catalysed reaction is a ubiquinone + NADH + 5 H(+)(in) = a ubiquinol + NAD(+) + 4 H(+)(out). In terms of biological role, core subunit of the mitochondrial membrane respiratory chain NADH dehydrogenase (Complex I) which catalyzes electron transfer from NADH through the respiratory chain, using ubiquinone as an electron acceptor. Essential for the catalytic activity and assembly of complex I. The chain is NADH-ubiquinone oxidoreductase chain 5 (MT-ND5) from Bos taurus (Bovine).